The primary structure comprises 439 residues: Secreted aspartic protease LUC8 (439 aa).

The signal sequence occupies residues 1-20; that stretch reads MMHAFHHLAVLLIGSLPASA. N-linked (GlcNAc...) asparagine glycans are attached at residues N33 and N54. The Peptidase A1 domain occupies 51 to 435; it reads YLFNITVGTP…DFETQSFGLA (385 aa). Residue D69 is part of the active site. Residues N110, N126, N179, and N289 are each glycosylated (N-linked (GlcNAc...) asparagine). The active site involves D300. N-linked (GlcNAc...) asparagine glycosylation is found at N329 and N373. C355 and C391 form a disulfide bridge.

This sequence belongs to the peptidase A1 family.

The protein resides in the secreted. Functionally, secreted aspartic protease; part of the gene cluster that mediates the biosynthesis of the mycotoxin lucilactaene and the lucilactaene-related compound NG-391 that act as cell cycle inhibitors with potent growth inhibitory activity against malarial parasites, moderate growth inhibitory activity against cancer cells, and no activity against bacteria and fungi. Within the cluster, LUC7 and LUC8 encode proteins which are not commonly involved in the biosynthesis of secondary metabolites and are not essential for lucilactaene biosynthesis. The polypeptide is Secreted aspartic protease LUC8 (Fusarium sp).